Here is a 1162-residue protein sequence, read N- to C-terminus: Nucleoporin nup132 (1162 aa).

This sequence belongs to the nucleoporin Nup133 family. As to quaternary structure, component of the npc107-120 complex which consists of nup85, nup107, nup120, nup131, nup132 and seh1. Interacts with nup107.

It localises to the nucleus envelope. Functions as a component of the nuclear pore complex (NPC). NPC components, collectively referred to as nucleoporins (NUPs), can play the role of both NPC structural components and of docking or interaction partners for transiently associated nuclear transport factors. Active directional transport is assured by both, a Phe-Gly (FG) repeat affinity gradient for these transport factors across the NPC and a transport cofactor concentration gradient across the nuclear envelope. The sequence is that of Nucleoporin nup132 (nup132) from Schizosaccharomyces pombe (strain 972 / ATCC 24843) (Fission yeast).